Consider the following 572-residue polypeptide: Protein misato homolog 1 (572 aa).

The protein belongs to the misato family.

It is found in the mitochondrion outer membrane. It localises to the cytoplasm. Its function is as follows. Involved in the regulation of mitochondrial distribution and morphology. Required for mitochondrial fusion and mitochondrial network formation. The protein is Protein misato homolog 1 (MSTO1) of Bos taurus (Bovine).